We begin with the raw amino-acid sequence, 179 residues long: ATP synthase subunit b (179 aa).

A helical membrane pass occupies residues 27–47; the sequence is TAITFLVMLVVLGKFAWGPIV.

The protein belongs to the ATPase B chain family. As to quaternary structure, F-type ATPases have 2 components, F(1) - the catalytic core - and F(0) - the membrane proton channel. F(1) has five subunits: alpha(3), beta(3), gamma(1), delta(1), epsilon(1). F(0) has three main subunits: a(1), b(2) and c(10-14). The alpha and beta chains form an alternating ring which encloses part of the gamma chain. F(1) is attached to F(0) by a central stalk formed by the gamma and epsilon chains, while a peripheral stalk is formed by the delta and b chains.

The protein resides in the cell inner membrane. Its function is as follows. F(1)F(0) ATP synthase produces ATP from ADP in the presence of a proton or sodium gradient. F-type ATPases consist of two structural domains, F(1) containing the extramembraneous catalytic core and F(0) containing the membrane proton channel, linked together by a central stalk and a peripheral stalk. During catalysis, ATP synthesis in the catalytic domain of F(1) is coupled via a rotary mechanism of the central stalk subunits to proton translocation. Component of the F(0) channel, it forms part of the peripheral stalk, linking F(1) to F(0). The chain is ATP synthase subunit b from Anaeromyxobacter sp. (strain K).